The sequence spans 253 residues: Imidazole glycerol phosphate synthase subunit HisF (253 aa).

Active-site residues include aspartate 11 and aspartate 130.

It belongs to the HisA/HisF family. In terms of assembly, heterodimer of HisH and HisF.

It localises to the cytoplasm. It catalyses the reaction 5-[(5-phospho-1-deoxy-D-ribulos-1-ylimino)methylamino]-1-(5-phospho-beta-D-ribosyl)imidazole-4-carboxamide + L-glutamine = D-erythro-1-(imidazol-4-yl)glycerol 3-phosphate + 5-amino-1-(5-phospho-beta-D-ribosyl)imidazole-4-carboxamide + L-glutamate + H(+). The protein operates within amino-acid biosynthesis; L-histidine biosynthesis; L-histidine from 5-phospho-alpha-D-ribose 1-diphosphate: step 5/9. In terms of biological role, IGPS catalyzes the conversion of PRFAR and glutamine to IGP, AICAR and glutamate. The HisF subunit catalyzes the cyclization activity that produces IGP and AICAR from PRFAR using the ammonia provided by the HisH subunit. The protein is Imidazole glycerol phosphate synthase subunit HisF of Dehalococcoides mccartyi (strain CBDB1).